Reading from the N-terminus, the 118-residue chain is BET1 homolog (118 aa).

Residues 1–94 (MRRAGLGEGV…LKILSRGSQT (94 aa)) are Cytoplasmic-facing. Residues 26–88 (SACEEENERL…GKTMGKLKIL (63 aa)) enclose the t-SNARE coiled-coil homology domain. Residue serine 50 is modified to Phosphoserine. Residues 95 to 115 (KLLCYMMLFSLFVFFIIYWII) form a helical; Anchor for type IV membrane protein membrane-spanning segment. The Vesicular portion of the chain corresponds to 116 to 118 (KLR).

This sequence belongs to the BET1 family. As to quaternary structure, interacts with SNARE complex members GOSR2, SEC22B and STX5. Interacts with LMAN1/ERGIC53. Interacts with STX17. As to expression, expressed in muscle.

It localises to the endoplasmic reticulum membrane. The protein resides in the golgi apparatus. The protein localises to the cis-Golgi network membrane. It is found in the golgi apparatus membrane. Required for vesicular transport from the ER to the Golgi complex. Functions as a SNARE involved in the docking process of ER-derived vesicles with the cis-Golgi membrane. The polypeptide is BET1 homolog (BET1) (Homo sapiens (Human)).